The following is a 379-amino-acid chain: Cytochrome b (379 aa).

The next 4 membrane-spanning stretches (helical) occupy residues 33–53 (FGSLLGLCLIIQIASGLFLDM), 77–98 (WLIRYIHANGASLFFVCLYLHI), 113–133 (WNIGIILLFLTMATAFMGYVL), and 178–198 (FFAFHFILPFIIAAMAMVHLL). Heme b contacts are provided by histidine 83 and histidine 97. The heme b site is built by histidine 182 and histidine 196. Histidine 201 serves as a coordination point for a ubiquinone. 4 helical membrane passes run 226–246 (TKDFLGIVLLLTFFFTMVPFF), 288–308 (LGGVIALILSILILALLPHIQ), 320–340 (ISQFLFWLLVSDVLVLTWIGG), and 347–367 (FIIIGQIASLSYFTIILVLMP).

It belongs to the cytochrome b family. As to quaternary structure, the cytochrome bc1 complex contains 11 subunits: 3 respiratory subunits (MT-CYB, CYC1 and UQCRFS1), 2 core proteins (UQCRC1 and UQCRC2) and 6 low-molecular weight proteins (UQCRH/QCR6, UQCRB/QCR7, UQCRQ/QCR8, UQCR10/QCR9, UQCR11/QCR10 and a cleavage product of UQCRFS1). This cytochrome bc1 complex then forms a dimer. It depends on heme b as a cofactor.

It is found in the mitochondrion inner membrane. In terms of biological role, component of the ubiquinol-cytochrome c reductase complex (complex III or cytochrome b-c1 complex) that is part of the mitochondrial respiratory chain. The b-c1 complex mediates electron transfer from ubiquinol to cytochrome c. Contributes to the generation of a proton gradient across the mitochondrial membrane that is then used for ATP synthesis. The protein is Cytochrome b (MT-CYB) of Dipodomys nelsoni (Nelson's kangaroo rat).